A 757-amino-acid chain; its full sequence is Maltose phosphorylase (757 aa).

Residue 354-355 coordinates substrate; it reads WD. E483 serves as the catalytic Proton donor. Position 588 to 589 (588 to 589) interacts with substrate; sequence KQ.

Belongs to the glycosyl hydrolase 65 family.

The enzyme catalyses D-maltose + phosphate = beta-D-glucose 1-phosphate + D-glucose. It functions in the pathway glycan degradation; maltose degradation. In terms of biological role, catalyzes the phosphorolysis of maltose, leading to the formation of glucose and glucose 1-P. The polypeptide is Maltose phosphorylase (mdxK) (Bacillus subtilis (strain 168)).